A 490-amino-acid chain; its full sequence is Gallate decarboxylase (490 aa).

Asp-165 is a binding site for Mn(2+). Residues 168–170 (IHR) and Gly-187 each bind prenylated FMN. Glu-233 serves as a coordination point for Mn(2+). The Proton acceptor role is filled by Glu-289.

It belongs to the UbiD family. Prenylated FMN is required as a cofactor. It depends on Mn(2+) as a cofactor.

It catalyses the reaction 3,4,5-trihydroxybenzoate + H(+) = 1,2,3-trihydroxybenzene + CO2. The enzyme catalyses 3,4-dihydroxybenzoate + H(+) = catechol + CO2. Involved in tannin degradation. Catalyzes the decarboxylation of gallic acid and protocatechuic acid to pyrogallol and catechol, respectively. The polypeptide is Gallate decarboxylase (Lactiplantibacillus plantarum (strain ATCC BAA-793 / NCIMB 8826 / WCFS1) (Lactobacillus plantarum)).